Reading from the N-terminus, the 464-residue chain is Protein phosphatase 2C homolog 2 (464 aa).

One can recognise a PPM-type phosphatase domain in the interval 23–292; sequence AFGLCAMQGW…DNMSIVVVAL (270 aa). Mn(2+)-binding residues include aspartate 62, glycine 63, aspartate 234, and aspartate 283. The interval 174–355 is interaction with IRE1; sequence DGFVEMDRVN…KPQDKFTRDH (182 aa). Disordered stretches follow at residues 361-398 and 434-464; these read SVTAADNDDPMDIDDTDADTDAENLDPSSQSKSKTSGP and QLLQTMGHDPASSHPENDSNTDHKAGRSHLQ. A compositionally biased stretch (acidic residues) spans 366 to 384; it reads DNDDPMDIDDTDADTDAEN. 2 positions are modified to phosphothreonine: threonine 376 and threonine 380. Positions 386–396 are enriched in polar residues; sequence DPSSQSKSKTS. Positions 448 to 458 are enriched in basic and acidic residues; sequence PENDSNTDHKA.

This sequence belongs to the PP2C family. In terms of assembly, interacts with IRE1 (when phosphorylated); the interaction is direct and serves to attenuate the endoplasmic reticulum unfolded protein response. Interacts (when phosphorylated) with RAD53 (via domain FHA 1); the interaction is direct and serves to regulate DNA damage checkpoint signaling. Interacts with the ATG17-ATG29-ATG31 and ATG1-ATG13 supercomplex; to regulate induction of autophagy. The cofactor is Mg(2+). It depends on Mn(2+) as a cofactor.

The protein resides in the nucleus. It localises to the cytoplasm. Its subcellular location is the cytosol. It carries out the reaction O-phospho-L-seryl-[protein] + H2O = L-seryl-[protein] + phosphate. The enzyme catalyses O-phospho-L-threonyl-[protein] + H2O = L-threonyl-[protein] + phosphate. Dephosphorylating regulator for many key proteins. Dephosphorylates the cell cycle master regulator CDC28/cyclin-dependent kinase 1; its activity appears redundant with phosphatase PTC3. Dephosphorylates HOG1 at 'Thr-171', to attenuate activation of the stress-activated p38MAPK cascade; its activity appears redundant with phosphatase PTC3. Positively regulates both nonselective macroautophagy as well as the selective cytoplasm-to-vacuole (cvt) autophagy pathway and the genotoxin-induced targeted autophagy (GTA) pathway, possibly by dephosphorylating ATG13 to enable the interaction between the ATG17-ATG29-ATG31 and ATG1-ATG13 complexes; its activity appears redundant with phosphatase PTC3. Dephosphorylates RAD53, to regulate DNA damage checkpoint signaling. Dephosphorylates IRE1, to negatively regulate the endoplasmic reticulum unfolded protein response. In Saccharomyces cerevisiae (strain ATCC 204508 / S288c) (Baker's yeast), this protein is Protein phosphatase 2C homolog 2 (PTC2).